The primary structure comprises 234 residues: Exotoxin type G (234 aa).

Positions 1–24 (MKTNILTIIILSCVFSYGSQLAYA) are cleaved as a signal peptide.

The protein belongs to the staphylococcal/streptococcal toxin family.

In terms of biological role, mitogenic for human peripheral blood lymphocytes. This Streptococcus pyogenes serotype M1 protein is Exotoxin type G (speG).